The primary structure comprises 572 residues: Proline--tRNA ligase (572 aa).

Belongs to the class-II aminoacyl-tRNA synthetase family. ProS type 1 subfamily. In terms of assembly, homodimer.

The protein localises to the cytoplasm. It catalyses the reaction tRNA(Pro) + L-proline + ATP = L-prolyl-tRNA(Pro) + AMP + diphosphate. In terms of biological role, catalyzes the attachment of proline to tRNA(Pro) in a two-step reaction: proline is first activated by ATP to form Pro-AMP and then transferred to the acceptor end of tRNA(Pro). As ProRS can inadvertently accommodate and process non-cognate amino acids such as alanine and cysteine, to avoid such errors it has two additional distinct editing activities against alanine. One activity is designated as 'pretransfer' editing and involves the tRNA(Pro)-independent hydrolysis of activated Ala-AMP. The other activity is designated 'posttransfer' editing and involves deacylation of mischarged Ala-tRNA(Pro). The misacylated Cys-tRNA(Pro) is not edited by ProRS. This is Proline--tRNA ligase from Caldicellulosiruptor bescii (strain ATCC BAA-1888 / DSM 6725 / KCTC 15123 / Z-1320) (Anaerocellum thermophilum).